The chain runs to 115 residues: Large ribosomal subunit protein bL20c (115 aa).

This sequence belongs to the bacterial ribosomal protein bL20 family.

Its subcellular location is the plastid. It localises to the chloroplast. Functionally, binds directly to 23S ribosomal RNA and is necessary for the in vitro assembly process of the 50S ribosomal subunit. It is not involved in the protein synthesizing functions of that subunit. The chain is Large ribosomal subunit protein bL20c from Emiliania huxleyi (Coccolithophore).